The sequence spans 309 residues: Porphobilinogen deaminase (309 aa).

Cysteine 242 bears the S-(dipyrrolylmethanemethyl)cysteine mark.

This sequence belongs to the HMBS family. Monomer. Dipyrromethane is required as a cofactor.

The catalysed reaction is 4 porphobilinogen + H2O = hydroxymethylbilane + 4 NH4(+). Its pathway is porphyrin-containing compound metabolism; protoporphyrin-IX biosynthesis; coproporphyrinogen-III from 5-aminolevulinate: step 2/4. Its function is as follows. Tetrapolymerization of the monopyrrole PBG into the hydroxymethylbilane pre-uroporphyrinogen in several discrete steps. In Legionella pneumophila (strain Paris), this protein is Porphobilinogen deaminase.